The chain runs to 110 residues: Phosphoribosyl-ATP pyrophosphatase (110 aa).

Belongs to the PRA-PH family.

It is found in the cytoplasm. It catalyses the reaction 1-(5-phospho-beta-D-ribosyl)-ATP + H2O = 1-(5-phospho-beta-D-ribosyl)-5'-AMP + diphosphate + H(+). It functions in the pathway amino-acid biosynthesis; L-histidine biosynthesis; L-histidine from 5-phospho-alpha-D-ribose 1-diphosphate: step 2/9. The polypeptide is Phosphoribosyl-ATP pyrophosphatase (Pseudomonas fluorescens (strain Pf0-1)).